A 139-amino-acid chain; its full sequence is D-ribose pyranase (139 aa).

H20 acts as the Proton donor in catalysis. Substrate is bound by residues D28, H106, and 128–130 (YAN).

This sequence belongs to the RbsD / FucU family. RbsD subfamily. In terms of assembly, homodecamer.

Its subcellular location is the cytoplasm. The enzyme catalyses beta-D-ribopyranose = beta-D-ribofuranose. Its pathway is carbohydrate metabolism; D-ribose degradation; D-ribose 5-phosphate from beta-D-ribopyranose: step 1/2. Its function is as follows. Catalyzes the interconversion of beta-pyran and beta-furan forms of D-ribose. The protein is D-ribose pyranase of Shewanella halifaxensis (strain HAW-EB4).